A 348-amino-acid chain; its full sequence is Rhodopsin (348 aa).

Residues 1 to 33 (TEGPYFYVPMVNTTGIVRSPYEYPQYYLVNPAA) are Extracellular-facing. Asn12 is a glycosylation site (N-linked (GlcNAc...) asparagine). Residues 34-58 (FAILGAYMFFLIIVGFPVNFMTLYV) traverse the membrane as a helical segment. At 59–70 (TLEHKKLRTPLN) the chain is on the cytoplasmic side. The helical transmembrane segment at 71 to 93 (YILLNLAVADLFMVIGGFTTTMY) threads the bilayer. Residues 94–107 (TSMHGYFVLGRLGC) lie on the Extracellular side of the membrane. A disulfide bridge connects residues Cys107 and Cys184. The chain crosses the membrane as a helical span at residues 108 to 130 (NLEGFFATLGGMISLWSLAVLAI). Residues 131-133 (ERW) carry the 'Ionic lock' involved in activated form stabilization motif. At 131–149 (ERWVVVCKPISNFRFGENH) the chain is on the cytoplasmic side. The chain crosses the membrane as a helical span at residues 150 to 170 (AIMGVSLTWGMALACTVPPLV). The Extracellular segment spans residues 171 to 199 (GWSRYIPEGMQCSCGIDYYTRAEGFNNET). N-linked (GlcNAc...) asparagine glycosylation occurs at Asn197. The chain crosses the membrane as a helical span at residues 200–221 (FVLYMFCCHFTVPLTIIFFCYG). Topologically, residues 222–249 (RLLCAVKEAAAAQQESETTQRAEREVTR) are cytoplasmic. The helical transmembrane segment at 250 to 271 (MVVIMVIGFLVCWLPYASVAWF) threads the bilayer. The Extracellular segment spans residues 272–283 (VFTHQGSEFGPL). Residues 284–305 (FMTIPAFFAKSSAIYNPMIYIC) traverse the membrane as a helical segment. Lys293 carries the post-translational modification N6-(retinylidene)lysine. The Cytoplasmic segment spans residues 306 to 348 (MNKQFRHCMITTLFCGKNPFEGEEEGASSTKTEASSASSVSPA). Cys320 carries S-palmitoyl cysteine lipidation. A disordered region spans residues 327–348 (GEEEGASSTKTEASSASSVSPA). The segment covering 332–348 (ASSTKTEASSASSVSPA) has biased composition (low complexity).

It belongs to the G-protein coupled receptor 1 family. Opsin subfamily. Phosphorylated on some or all of the serine and threonine residues present in the C-terminal region. Post-translationally, contains one covalently linked retinal chromophore.

Its subcellular location is the membrane. It is found in the cell projection. The protein localises to the cilium. It localises to the photoreceptor outer segment. Its function is as follows. Photoreceptor required for image-forming vision at low light intensity. While most salt water fish species use retinal as chromophore, most freshwater fish use 3-dehydroretinal, or a mixture of retinal and 3-dehydroretinal. Light-induced isomerization of 11-cis to all-trans retinal triggers a conformational change that activates signaling via G-proteins. Subsequent receptor phosphorylation mediates displacement of the bound G-protein alpha subunit by arrestin and terminates signaling. In Sargocentron xantherythrum (Hawaiian squirrelfish), this protein is Rhodopsin (rho).